Consider the following 434-residue polypeptide: UDP-glucose 6-dehydrogenase (434 aa).

NAD(+)-binding positions include 2–19 (NITF…GIIM), V11, D30, K35, T121, and E152. Residues 148–152 (EFLRE), K204, N208, 249–253 (FLNAG), and G257 contribute to the substrate site. The active-site Nucleophile is C260. Residue K263 participates in NAD(+) binding. Residue K321 coordinates substrate. R328 is an NAD(+) binding site.

This sequence belongs to the UDP-glucose/GDP-mannose dehydrogenase family.

The catalysed reaction is UDP-alpha-D-glucose + 2 NAD(+) + H2O = UDP-alpha-D-glucuronate + 2 NADH + 3 H(+). The protein operates within nucleotide-sugar biosynthesis; UDP-alpha-D-glucuronate biosynthesis; UDP-alpha-D-glucuronate from UDP-alpha-D-glucose: step 1/1. The protein is UDP-glucose 6-dehydrogenase (udg) of Rickettsia prowazekii (strain Madrid E).